We begin with the raw amino-acid sequence, 492 residues long: Dipeptide permease D (492 aa).

The next 13 helical transmembrane spans lie at Val14–Leu34, Ala49–Ala69, Leu91–Val111, Gly138–Cys158, Trp167–Cys187, Asn212–Trp232, Ser236–Leu256, Leu269–Ser289, Met312–Val332, Ile344–Leu364, Leu379–Met399, Val413–Ile433, and Val458–Leu478.

This sequence belongs to the major facilitator superfamily. Proton-dependent oligopeptide transporter (POT/PTR) (TC 2.A.17) family. DtpD subfamily.

The protein localises to the cell inner membrane. Its function is as follows. Probable proton-dependent permease that transports dipeptides. In Klebsiella pneumoniae (strain 342), this protein is Dipeptide permease D.